Reading from the N-terminus, the 795-residue chain is Plakophilin-2 (795 aa).

Positions 1–318 (MAVPGSLAEC…MTLERAVNML (318 aa)) are required for binding to single-stranded DNA. The residue at position 44 (Ser44) is a Phosphoserine. Residue Arg46 is modified to Omega-N-methylarginine. Phosphoserine is present on residues Ser82, Ser132, Ser135, Ser151, Ser154, Ser155, Ser172, Ser188, and Ser232. Disordered stretches follow at residues 197-233 (GTARRPPGCGSFSDAVFDNGPLKPTMPTHPPGTSHSA) and 245-274 (SQARLQSTQSRTARSSWPRSSVRSSLREPG). Residues 245-257 (SQARLQSTQSRTA) show a composition bias toward polar residues. The span at 258–268 (RSSWPRSSVRS) shows a compositional bias: low complexity. Phosphoserine occurs at positions 265 and 287. ARM repeat units follow at residues 299–339 (DAQL…QHES), 343–382 (SEARKRVNQLRGIPKLLQLLKLQNEDVQRAACGALRNLVF), 385–425 (NDNK…NLSS), 484–530 (PDGR…NLSY), 585–625 (PHGI…NLTA), 633–672 (LVARMVVQKENGLQHTRKMLHVGDPSVKKTAVSLLRNLSR), 677–718 (QNEI…NLMQ), and 721–763 (YQNA…SLWA).

Belongs to the beta-catenin family. Interacts with DSC2. Interacts with JUP. Interacts with KRT5/CK5, KRT8/CK8, KRT14/CK14, KRT18/CK18 and VIM. Interacts (via N-terminus) with MARK3/C-TAK1. Interacts with DSP. Interacts with DSG1, DSG2 and DSG3. Interacts (via N-terminus) with CTNNB1. Interacts with CDH1. Interacts with the RNA polymerase III (Pol III) complex proteins POLR3A/RPC155, POLR3F/RPC39 and POLR3C/RPC82. Interacts with CTNNA3. Interacts (via N-terminus) with SCN5A/Nav1.5. Interacts with ANK3/ANKG and GJA1/CX43. In terms of tissue distribution, expressed in cardiomyocytes in the heart (at protein level).

The protein resides in the nucleus. It localises to the cell junction. The protein localises to the desmosome. It is found in the cytoplasm. In terms of biological role, a component of desmosome cell-cell junctions which are required for positive regulation of cellular adhesion. Regulates focal adhesion turnover resulting in changes in focal adhesion size, cell adhesion and cell spreading, potentially via transcriptional modulation of beta-integrins. Required to maintain gingival epithelial barrier function. Important component of the desmosome that is also required for localization of desmosome component proteins such as DSC2, DSG2 and JUP to the desmosome cell-cell junction. Required for the formation of desmosome cell junctions in cardiomyocytes, thereby required for the correct formation of the heart, specifically trabeculation and formation of the atria walls. Loss of desmosome cell junctions leads to mis-localization of DSP and DSG2 resulting in disruption of cell-cell adhesion and disordered intermediate filaments. Modulates profibrotic gene expression in cardiomyocytes via regulation of DSP expression and subsequent activation of downstream TGFB1 and MAPK14/p38 MAPK signaling. Required for cardiac sodium current propagation and electrical synchrony in cardiac myocytes, via ANK3 stabilization and modulation of SCN5A/Nav1.5 localization to cell-cell junctions. Required for mitochondrial function, nuclear envelope integrity and positive regulation of SIRT3 transcription via maintaining DES localization at its nuclear envelope and cell tip anchoring points, and thereby preserving regulation of the transcriptional program. Maintenance of nuclear envelope integrity protects against DNA damage and transcriptional dysregulation of genes, especially those involved in the electron transport chain, thereby preserving mitochondrial function and protecting against superoxide radical anion generation. Binds single-stranded DNA (ssDNA). May regulate the localization of GJA1 to gap junctions in intercalated disks of the heart. This chain is Plakophilin-2, found in Mus musculus (Mouse).